The chain runs to 883 residues: Aldehyde-alcohol dehydrogenase (883 aa).

Residues 13-456 (KLVAEKHVDE…DNVSAINLLN (444 aa)) form an aldehyde dehydrogenase region. NAD(+) contacts are provided by residues 121 to 126 (ITPTTN), Gly-206, and Gly-224. Cys-257 acts as the Nucleophile in catalysis. Residues Glu-355, Leu-435, and 438 to 443 (GSYGRN) each bind NAD(+). The segment at 457-464 (IKKVGRRR) is linker. NAD(+)-binding positions include Asp-500, Asp-534, 561–565 (GSPMD), 612–613 (TT), Val-625, Lys-634, and Leu-653. Fe cation-binding residues include Asp-668, His-672, His-736, and His-750.

In the N-terminal section; belongs to the aldehyde dehydrogenase family. The protein in the C-terminal section; belongs to the iron-containing alcohol dehydrogenase family. Fe(2+) is required as a cofactor.

It catalyses the reaction an aldehyde + NAD(+) + H2O = a carboxylate + NADH + 2 H(+). The enzyme catalyses ethanol + NAD(+) = acetaldehyde + NADH + H(+). Has alcohol dehydrogenase activity. Has aldehyde dehydrogenase activity. Plays a role in enhancing virulence in mice, under ethanol stress conditions, perhaps by inducing expression of pneumolysin (Ply) and increasing production of hydrogen peroxide H(2)O(2). May be considered a potential virulence factor. The protein is Aldehyde-alcohol dehydrogenase of Streptococcus pneumoniae serotype 2 (strain D39 / NCTC 7466).